Reading from the N-terminus, the 829-residue chain is Periplasmic nitrate reductase (829 aa).

A signal peptide (tat-type signal) is located at residues 1–27 (MNRRDFMKANAVIAAASAAGLALPAGA). Positions 39 to 95 (LEWNKAPCRFCGTGCSVMVATREGKVVATHGDANSEVNRGLSCIKGYFLSKIMYGRD) constitute a 4Fe-4S Mo/W bis-MGD-type domain. Residues Cys46, Cys49, Cys53, and Cys81 each coordinate [4Fe-4S] cluster. Mo-bis(molybdopterin guanine dinucleotide)-binding positions include Lys83, Gln150, Asn175, Cys179, 212–219 (WGSNMAEM), 243–247 (STFEH), 262–264 (QTD), Met373, Gln377, Asn483, 509–510 (SD), Lys532, Asp559, and 719–728 (TGRVLEHWHS). Trp795 contacts substrate. The Mo-bis(molybdopterin guanine dinucleotide) site is built by Asn803 and Lys820.

Belongs to the prokaryotic molybdopterin-containing oxidoreductase family. NasA/NapA/NarB subfamily. As to quaternary structure, component of the periplasmic nitrate reductase NapAB complex composed of NapA and NapB. [4Fe-4S] cluster serves as cofactor. The cofactor is Mo-bis(molybdopterin guanine dinucleotide). Predicted to be exported by the Tat system. The position of the signal peptide cleavage has not been experimentally proven.

It is found in the periplasm. The enzyme catalyses 2 Fe(II)-[cytochrome] + nitrate + 2 H(+) = 2 Fe(III)-[cytochrome] + nitrite + H2O. Functionally, catalytic subunit of the periplasmic nitrate reductase complex NapAB. Receives electrons from NapB and catalyzes the reduction of nitrate to nitrite. In Shewanella denitrificans (strain OS217 / ATCC BAA-1090 / DSM 15013), this protein is Periplasmic nitrate reductase.